The sequence spans 1616 residues: Myosin-IIIa (1616 aa).

The Protein kinase domain occupies 21 to 287 (WEITETIGKG…VSELLQHKFI (267 aa)). ATP contacts are provided by residues 27–35 (IGKGTYGKV) and Lys-50. Catalysis depends on Asp-150, which acts as the Proton acceptor. Residues 338–1053 (KDVDDLATLE…HVEQLNLMRK (716 aa)) enclose the Myosin motor domain. The segment at 934-956 (LMDLLSKMVVGQPHFVRCIKPNS) is actin-binding. 3 consecutive IQ domains span residues 1055–1084 (AIDK…KRKE), 1082–1111 (RKES…MKNT), and 1346–1375 (EDKA…SSFK). Residues 1401–1479 (EEINNIKKKD…RRVSSQQCLS (79 aa)) form an interaction with MORN4 region. 2 disordered regions span residues 1545-1567 (LPSR…QQEL) and 1581-1616 (AESP…VQQS). 2 stretches are compositionally biased toward basic and acidic residues: residues 1550 to 1564 (GPKE…RRPQ) and 1583 to 1592 (SPEKEEEREP). Over residues 1602–1616 (LLRKTSQRRRLVQQS) the composition is skewed to basic residues.

The protein in the C-terminal section; belongs to the TRAFAC class myosin-kinesin ATPase superfamily. Myosin family. It in the N-terminal section; belongs to the protein kinase superfamily. STE Ser/Thr protein kinase family. Interacts with MORN4. Interacts (via C-terminus) with ESPN and ESPNL. Strongest expression in retina, retinal pigment epithelial cells, cochlea and pancreas.

It is found in the cytoplasm. Its subcellular location is the cytoskeleton. The protein resides in the cell projection. The protein localises to the filopodium tip. It localises to the stereocilium. The catalysed reaction is L-seryl-[protein] + ATP = O-phospho-L-seryl-[protein] + ADP + H(+). It carries out the reaction L-threonyl-[protein] + ATP = O-phospho-L-threonyl-[protein] + ADP + H(+). The enzyme catalyses ATP + H2O = ADP + phosphate + H(+). Actin-dependent motor protein with a protein kinase activity, playing an essential role in hearing. Probably also plays a role in vision. Required for normal cochlear hair bundle development and hearing. Plays an important role in the early steps of cochlear hair bundle morphogenesis. Influences the number and lengths of stereocilia to be produced and limits the growth of microvilli within the forming auditory hair bundles thereby contributing to the architecture of the hair bundle, including its staircase pattern. Involved in the elongation of actin in stereocilia tips by transporting the actin regulatory factor ESPN to the plus ends of actin filaments. This Homo sapiens (Human) protein is Myosin-IIIa (MYO3A).